A 149-amino-acid chain; its full sequence is D-aminoacyl-tRNA deacylase (149 aa).

Residues 137-138 (GP) carry the Gly-cisPro motif, important for rejection of L-amino acids motif.

Belongs to the DTD family. As to quaternary structure, homodimer.

Its subcellular location is the cytoplasm. It carries out the reaction glycyl-tRNA(Ala) + H2O = tRNA(Ala) + glycine + H(+). The enzyme catalyses a D-aminoacyl-tRNA + H2O = a tRNA + a D-alpha-amino acid + H(+). Its function is as follows. An aminoacyl-tRNA editing enzyme that deacylates mischarged D-aminoacyl-tRNAs. Also deacylates mischarged glycyl-tRNA(Ala), protecting cells against glycine mischarging by AlaRS. Acts via tRNA-based rather than protein-based catalysis; rejects L-amino acids rather than detecting D-amino acids in the active site. By recycling D-aminoacyl-tRNA to D-amino acids and free tRNA molecules, this enzyme counteracts the toxicity associated with the formation of D-aminoacyl-tRNA entities in vivo and helps enforce protein L-homochirality. In Syntrophotalea carbinolica (strain DSM 2380 / NBRC 103641 / GraBd1) (Pelobacter carbinolicus), this protein is D-aminoacyl-tRNA deacylase.